The sequence spans 268 residues: Myeloid leukemia factor 1 (268 aa).

Ser-8, Ser-32, and Ser-34 each carry phosphoserine. Disordered regions lie at residues 44–66 (ISDGRGRAHNRRGHNDGEDSLTH) and 209–268 (GRHN…SNKK). An interaction with COPS3 region spans residues 50–125 (RAHNRRGHND…IGDEPPKVFQ (76 aa)). Basic and acidic residues-rich tracts occupy residues 56-65 (GHNDGEDSLT) and 226-237 (PGSRELKRREKP).

The protein belongs to the MLF family. Interacts with CENPU. Also interacts with NRBP1/MADM, YWHAZ/14-3-3-zeta and HNRPUL2/MANP. NRBP1 recruits a serine kinase which phosphorylates both itself and MLF1. Phosphorylated MLF1 then binds to YWHAZ and is retained in the cytoplasm. Retained in the nucleus by binding to HNRPUL2. Binds to COPS3/CSN3 which is required for suppression of COP1 and activation of p53. In terms of processing, phosphorylation is required for binding to YWHAZ. In terms of tissue distribution, most abundant in testis, ovary, skeletal muscle, heart, kidney and colon. Low expression in spleen, thymus and peripheral blood leukocytes.

The protein resides in the cytoplasm. The protein localises to the nucleus. It is found in the cell projection. Its subcellular location is the cilium. It localises to the cytoskeleton. The protein resides in the cilium basal body. Functionally, involved in lineage commitment of primary hemopoietic progenitors by restricting erythroid formation and enhancing myeloid formation. Interferes with erythropoietin-induced erythroid terminal differentiation by preventing cells from exiting the cell cycle through suppression of CDKN1B/p27Kip1 levels. Suppresses COP1 activity via CSN3 which activates p53 and induces cell cycle arrest. Binds DNA and affects the expression of a number of genes so may function as a transcription factor in the nucleus. The sequence is that of Myeloid leukemia factor 1 (MLF1) from Homo sapiens (Human).